The sequence spans 389 residues: Alanine racemase 1 (389 aa).

Catalysis depends on K41, which acts as the Proton acceptor; specific for D-alanine. K41 bears the N6-(pyridoxal phosphate)lysine mark. R137 is a binding site for substrate. The active-site Proton acceptor; specific for L-alanine is the Y266. Residue M313 coordinates substrate.

Belongs to the alanine racemase family. Pyridoxal 5'-phosphate serves as cofactor.

It catalyses the reaction L-alanine = D-alanine. It participates in amino-acid biosynthesis; D-alanine biosynthesis; D-alanine from L-alanine: step 1/1. Catalyzes the interconversion of L-alanine and D-alanine. May also act on other amino acids. The protein is Alanine racemase 1 (alr1) of Bacillus subtilis (strain 168).